A 123-amino-acid polypeptide reads, in one-letter code: F-box protein PP2-B3 (123 aa).

Residues 10–56 (PSPFDGLPENCISNIISFTTPRDACFAASVSKAFESAVQSDSVWEKF) form the F-box domain.

The chain is F-box protein PP2-B3 (PP2B3) from Arabidopsis thaliana (Mouse-ear cress).